The sequence spans 161 residues: Large ribosomal subunit protein eL21 (161 aa).

Belongs to the eukaryotic ribosomal protein eL21 family.

This chain is Large ribosomal subunit protein eL21 (rpl-21), found in Caenorhabditis elegans.